The sequence spans 336 residues: Foldase protein PrsA (336 aa).

Residues 1–22 (MKSAKKLLSVLCLGIFILTFTA) form the signal peptide. Residue cysteine 23 is the site of N-palmitoyl cysteine attachment. Cysteine 23 carries S-diacylglycerol cysteine lipidation. Residues 194–286 (PNTMNVSHIL…FGYHIIKINS (93 aa)) enclose the PpiC domain.

This sequence belongs to the PrsA family.

It is found in the cell membrane. It carries out the reaction [protein]-peptidylproline (omega=180) = [protein]-peptidylproline (omega=0). In terms of biological role, plays a major role in protein secretion by helping the post-translocational extracellular folding of several secreted proteins. The polypeptide is Foldase protein PrsA (Clostridium botulinum (strain Okra / Type B1)).